Consider the following 249-residue polypeptide: Proteasome subunit alpha type-3 (249 aa).

It belongs to the peptidase T1A family. As to quaternary structure, the 26S proteasome consists of a 20S proteasome core and two 19S regulatory subunits. The 20S proteasome core is composed of 28 subunits that are arranged in four stacked rings, resulting in a barrel-shaped structure. The two end rings are each formed by seven alpha subunits, and the two central rings are each formed by seven beta subunits. The catalytic chamber with the active sites is on the inside of the barrel.

The protein resides in the cytoplasm. It is found in the nucleus. Its function is as follows. The proteasome is a multicatalytic proteinase complex which is characterized by its ability to cleave peptides with Arg, Phe, Tyr, Leu, and Glu adjacent to the leaving group at neutral or slightly basic pH. The proteasome has an ATP-dependent proteolytic activity. This is Proteasome subunit alpha type-3 (PAG1) from Spinacia oleracea (Spinach).